An 85-amino-acid chain; its full sequence is UPF0512 protein R (85 aa).

The protein belongs to the UPF0512 family.

The polypeptide is UPF0512 protein R (Dictyostelium discoideum (Social amoeba)).